Here is a 401-residue protein sequence, read N- to C-terminus: Multidrug resistance protein MdtH (401 aa).

Transmembrane regions (helical) follow at residues 13 to 33 (YFLI…FPLI), 34 to 54 (SIHF…ALGL), 88 to 108 (IGFI…ACIL), 139 to 159 (ILML…SWLL), 164 to 184 (FQLV…FNAW), 211 to 231 (FIIY…VMLM), 248 to 268 (YIYI…TYWM), 275 to 295 (ETRL…IGSV), 298 to 318 (LYEL…AEPA), 341 to 361 (LSLA…YDLG), and 366 to 386 (FYQL…LILY).

The protein belongs to the major facilitator superfamily. DHA1 family. MdtH (TC 2.A.1.2.21) subfamily.

The protein resides in the cell inner membrane. This Blochmanniella floridana protein is Multidrug resistance protein MdtH.